Consider the following 349-residue polypeptide: 5-deoxyribose 1-phosphate isomerase (349 aa).

Residues 49 to 51 (RGA), Arg-92, and Gln-199 contribute to the substrate site. The active-site Proton donor is Asp-240. Residue 250-251 (NK) participates in substrate binding.

This sequence belongs to the EIF-2B alpha/beta/delta subunits family. DrdI subfamily.

The catalysed reaction is 5-deoxy-alpha-D-ribose 1-phosphate = 5-deoxy-D-ribulose 1-phosphate. It participates in carbohydrate degradation. Functionally, catalyzes the isomerization of 5-deoxy-alpha-D-ribose 1-phosphate to 5-deoxy-D-ribulose 1-phosphate, as part of a 5-deoxyribose salvage pathway that recycles this toxic radical SAM enzyme by-product to mainstream metabolites. The chain is 5-deoxyribose 1-phosphate isomerase from Clostridium botulinum (strain Loch Maree / Type A3).